Reading from the N-terminus, the 586-residue chain is Methionine--tRNA ligase, mitochondrial (586 aa).

A mitochondrion-targeting transit peptide spans 1-46; it reads MLRQCARWVLTRTRFGRGCRRYGSCSPSASGDAGEARAYFTTPIFY. A 'HIGH' region motif is present at residues 45-55; the sequence is FYVNAAPHIGH. The 'KMSKS' region motif lies at 340–344; it reads KMSKS. ATP is bound at residue Lys-343.

Belongs to the class-I aminoacyl-tRNA synthetase family.

Its subcellular location is the mitochondrion matrix. The catalysed reaction is tRNA(Met) + L-methionine + ATP = L-methionyl-tRNA(Met) + AMP + diphosphate. The sequence is that of Methionine--tRNA ligase, mitochondrial (Mars2) from Mus musculus (Mouse).